Here is a 31-residue protein sequence, read N- to C-terminus: Cytochrome b6-f complex subunit 6 (31 aa).

Residues 3–23 (LFIGYIIFLVAFFGLATGLFL) traverse the membrane as a helical segment.

Belongs to the PetL family. As to quaternary structure, the 4 large subunits of the cytochrome b6-f complex are cytochrome b6, subunit IV (17 kDa polypeptide, PetD), cytochrome f and the Rieske protein, while the 4 small subunits are PetG, PetL, PetM and PetN. The complex functions as a dimer.

The protein resides in the plastid. The protein localises to the chloroplast thylakoid membrane. Functionally, component of the cytochrome b6-f complex, which mediates electron transfer between photosystem II (PSII) and photosystem I (PSI), cyclic electron flow around PSI, and state transitions. PetL is important for photoautotrophic growth as well as for electron transfer efficiency and stability of the cytochrome b6-f complex. This Porphyra purpurea (Red seaweed) protein is Cytochrome b6-f complex subunit 6.